A 1194-amino-acid chain; its full sequence is Probable disease resistance protein RPP1 (1194 aa).

Residues 1–27 (MGSVMSLGCSKRKATNQDVDSESRKRR) are disordered. The TIR domain maps to 96–260 (WKHDVFPSFH…KISTDVSNML (165 aa)). 105-110 (HGADVR) provides a ligand contact to NAD(+). Residue E171 is part of the active site. An NB-ARC domain is found at 280-535 (DMLEQLLRLD…ACLFNGESTT (256 aa)). 14 LRR repeats span residues 623 to 647 (LSNT…HFVR), 658 to 681 (QLAL…GYES), 690 to 713 (PEFL…TKQL), 714 to 737 (RNLK…STAT), 739 to 760 (LEEL…IEKL), 761 to 784 (TSLQ…ENAT), 786 to 807 (LREL…IGTA), 808 to 831 (TNLK…IGDI), 832 to 855 (TDLE…IGNL), 866 to 878 (CSKL…NINL), 879 to 899 (KSLD…PEIS), 900 to 922 (THIS…IMSW), 943 to 965 (FDII…VKRM), and 966 to 991 (SRLR…SLDY). The tract at residues 1170 to 1194 (RRSSSPDLSPESSRVSSYDHCLRGD) is disordered. The segment covering 1171-1185 (RSSSPDLSPESSRVS) has biased composition (low complexity).

It belongs to the disease resistance TIR-NB-LRR family.

It catalyses the reaction NAD(+) + H2O = ADP-D-ribose + nicotinamide + H(+). Its function is as follows. TIR-NB-LRR receptor-like protein that confers resistance to the pathogen Hyaloperonospora arabidopsis. Probably acts as a NAD(+) hydrolase (NADase): in response to activation, catalyzes cleavage of NAD(+) into ADP-D-ribose (ADPR) and nicotinamide; NAD(+) cleavage triggering a defense system that promotes cell death. The protein is Probable disease resistance protein RPP1 of Arabidopsis thaliana (Mouse-ear cress).